The following is a 291-amino-acid chain: MEKKRSMTAAPAVAMTAVSMVLTVVVIVMWLGEAMPWAVALVVGLGLDGGWLATLAYERRLAARGDHSRAITGVGWGFGAVATGVLVAHALGEESAGAWLAVAWLPLAAKALWLVHGLWERTALTPTALDQIRDIQQDARDRAAVARAQLRAEAGTEVTRLEAVTGAGARVARVQAETAGELASAWSTLEEAREGEGTARALTCVTSRVTPTSPPSWRLPVWGPTEPVPAAIEGSADVVPLSNEEIDGIMSGLVDSGSYRVAAGRFRDMGYSAGEARLQASWRRVTREVAA.

Transmembrane regions (helical) follow at residues 24–44 (VVVI…LVVG), 71–91 (ITGV…AHAL), and 99–119 (WLAV…HGLW).

The protein resides in the cell membrane. Its function is as follows. Involved in plasmid transfer. This is Protein SpdB (spdB) from Streptomyces lividans.